The chain runs to 197 residues: MTLRAGVLAVQGDVSEHGDAIERAAAAHDRTAEVVEIREAGLVPDCDVLLLPGGESTTISRLIHREGIAEEIESHVEAGKPVLATCAGLIVSATDAQDDRVDTLNVIDVSVERNAFGRQRDSFEAPLDVTGLNESFPAVFIRAPVIDYVGEDVEVLATWDDRPVAVRDGPVVGTSFHPELTEDPRIHDLAFFDSVES.

Position 54–56 (54–56 (GES)) interacts with L-glutamine. The active-site Nucleophile is the C86. L-glutamine is bound by residues R113 and 141–142 (IR). Active-site charge relay system residues include H177 and E179.

Belongs to the glutaminase PdxT/SNO family. In the presence of PdxS, forms a dodecamer of heterodimers. Only shows activity in the heterodimer.

It carries out the reaction aldehydo-D-ribose 5-phosphate + D-glyceraldehyde 3-phosphate + L-glutamine = pyridoxal 5'-phosphate + L-glutamate + phosphate + 3 H2O + H(+). The enzyme catalyses L-glutamine + H2O = L-glutamate + NH4(+). It participates in cofactor biosynthesis; pyridoxal 5'-phosphate biosynthesis. In terms of biological role, catalyzes the hydrolysis of glutamine to glutamate and ammonia as part of the biosynthesis of pyridoxal 5'-phosphate. The resulting ammonia molecule is channeled to the active site of PdxS. The protein is Pyridoxal 5'-phosphate synthase subunit PdxT of Haloarcula marismortui (strain ATCC 43049 / DSM 3752 / JCM 8966 / VKM B-1809) (Halobacterium marismortui).